Consider the following 205-residue polypeptide: Ribonuclease HII (205 aa).

The 203-residue stretch at 1–203 folds into the RNase H type-2 domain; sequence MKAGIDEAGK…VSNLRQKTLD (203 aa). 2 residues coordinate a divalent metal cation: D6 and E7. R46 serves as a coordination point for substrate. D101 lines the a divalent metal cation pocket. Positions 143, 146, and 164 each coordinate substrate.

This sequence belongs to the RNase HII family. Requires Mn(2+) as cofactor. The cofactor is Mg(2+).

The protein resides in the cytoplasm. It carries out the reaction Endonucleolytic cleavage to 5'-phosphomonoester.. Its function is as follows. Endonuclease that specifically degrades the RNA of RNA-DNA hybrids. This Archaeoglobus fulgidus (strain ATCC 49558 / DSM 4304 / JCM 9628 / NBRC 100126 / VC-16) protein is Ribonuclease HII (rnhB).